A 213-amino-acid polypeptide reads, in one-letter code: Uridine kinase (213 aa).

15–22 (GASASGKS) lines the ATP pocket.

It belongs to the uridine kinase family.

Its subcellular location is the cytoplasm. The enzyme catalyses uridine + ATP = UMP + ADP + H(+). It catalyses the reaction cytidine + ATP = CMP + ADP + H(+). It functions in the pathway pyrimidine metabolism; CTP biosynthesis via salvage pathway; CTP from cytidine: step 1/3. It participates in pyrimidine metabolism; UMP biosynthesis via salvage pathway; UMP from uridine: step 1/1. This chain is Uridine kinase, found in Erwinia tasmaniensis (strain DSM 17950 / CFBP 7177 / CIP 109463 / NCPPB 4357 / Et1/99).